Consider the following 523-residue polypeptide: Lysine--tRNA ligase (523 aa).

Residues 30 to 38 (PSGYVHVGN) carry the 'HIGH' region motif. Residues D95, C99, H100, H106, C177, H180, C199, and H203 each coordinate Zn(2+). The 'KMSKS' region motif lies at 279–283 (KMSGS).

Belongs to the class-I aminoacyl-tRNA synthetase family. Zn(2+) is required as a cofactor.

It localises to the cytoplasm. The catalysed reaction is tRNA(Lys) + L-lysine + ATP = L-lysyl-tRNA(Lys) + AMP + diphosphate. This chain is Lysine--tRNA ligase (lysS), found in Pyrococcus horikoshii (strain ATCC 700860 / DSM 12428 / JCM 9974 / NBRC 100139 / OT-3).